We begin with the raw amino-acid sequence, 113 residues long: Large ribosomal subunit protein uL22 (113 aa).

This sequence belongs to the universal ribosomal protein uL22 family. As to quaternary structure, part of the 50S ribosomal subunit.

In terms of biological role, this protein binds specifically to 23S rRNA; its binding is stimulated by other ribosomal proteins, e.g. L4, L17, and L20. It is important during the early stages of 50S assembly. It makes multiple contacts with different domains of the 23S rRNA in the assembled 50S subunit and ribosome. Its function is as follows. The globular domain of the protein is located near the polypeptide exit tunnel on the outside of the subunit, while an extended beta-hairpin is found that lines the wall of the exit tunnel in the center of the 70S ribosome. This chain is Large ribosomal subunit protein uL22, found in Mycoplasmopsis synoviae (strain 53) (Mycoplasma synoviae).